The primary structure comprises 253 residues: Beta-crystallin B1 (253 aa).

Positions 1–18 (MSQPAAKASATAAVNPGP) are enriched in low complexity. The interval 1-53 (MSQPAAKASATAAVNPGPDGKGKAGPPPGPAPGSGPAPAPAPAPAQPAPAAKA) is disordered. Serine 2 bears the N-acetylserine mark. The tract at residues 2–59 (SQPAAKASATAAVNPGPDGKGKAGPPPGPAPGSGPAPAPAPAPAQPAPAAKAELPPGS) is N-terminal arm. Positions 25 to 47 (GPPPGPAPGSGPAPAPAPAPAQP) are enriched in pro residues. Beta/gamma crystallin 'Greek key' domains are found at residues 60–99 (YKLV…IVTS) and 100–144 (GPWV…RPIK). Positions 145-149 (MDAQE) are connecting peptide. 2 consecutive Beta/gamma crystallin 'Greek key' domains span residues 150-191 (HKLC…RVSS) and 192-234 (GTWV…RRLR). The tract at residues 236 to 253 (RQWHREGCFPVLAAEPPK) is C-terminal arm.

It belongs to the beta/gamma-crystallin family. Homo/heterodimer, or complexes of higher-order. The structure of beta-crystallin oligomers seems to be stabilized through interactions between the N-terminal arms. Post-translationally, specific cleavages in the N-terminal arm occur during lens maturation and give rise to truncated forms, leading to impaired oligomerization and protein insolubilization.

Crystallins are the dominant structural components of the vertebrate eye lens. The sequence is that of Beta-crystallin B1 (CRYBB1) from Bos taurus (Bovine).